The following is a 625-amino-acid chain: Grainyhead-like protein 2 homolog (625 aa).

A transcription activation region spans residues Met-1–Asp-93. Disordered regions lie at residues Ala-198–Asp-222 and Glu-428–Gly-452. A Grh/CP2 DB domain is found at Gly-244–Ile-482. The span at Gln-440 to Asp-451 shows a compositional bias: polar residues.

It belongs to the grh/CP2 family. Grainyhead subfamily. Homodimer, also forms heterodimers with GRHL1 or GRHL3.

The protein localises to the nucleus. It localises to the membrane. Its function is as follows. Transcription factor playing an important role in primary neurulation and in epithelial development. Binds directly to the consensus DNA sequence 5'-AACCGGTT-3' acting as an activator and repressor on distinct target genes. During embryogenesis, plays unique and cooperative roles with GRHL3 in establishing distinct zones of primary neurulation. Essential for closure 3 (rostral end of the forebrain), functions cooperatively with GRHL3 in closure 2 (forebrain/midbrain boundary) and posterior neuropore closure. Regulates epithelial morphogenesis acting as a target gene-associated transcriptional activator of apical junctional complex components. Up-regulates of CLDN3 and CLDN4, as well as of RAB25, which increases the CLDN4 protein and its localization at tight junctions. Comprises an essential component of the transcriptional machinery that establishes appropriate expression levels of CLDN4 and CDH1 in different types of epithelia. Exhibits functional redundancy with GRHL3 in epidermal morphogenetic events such as eyelid fusion and epidermal wound repair. In lung, forms a regulatory loop with NKX2-1 that coordinates lung epithelial cell morphogenesis and differentiation. In keratinocytes, plays a role in telomerase activation during cellular proliferation, regulates TERT expression by binding to TERT promoter region and inhibiting DNA methylation at the 5'-CpG island, possibly by interfering with DNMT1 enzyme activity. In addition, impairs keratinocyte differentiation and epidermal function by inhibiting the expression of genes clustered at the epidermal differentiation complex (EDC) as well as GRHL1 and GRHL3 through epigenetic mechanisms. The sequence is that of Grainyhead-like protein 2 homolog (Grhl2) from Mus musculus (Mouse).